We begin with the raw amino-acid sequence, 273 residues long: tRNA pseudouridine synthase B (273 aa).

Aspartate 38 functions as the Nucleophile in the catalytic mechanism.

It belongs to the pseudouridine synthase TruB family. Type 1 subfamily.

It catalyses the reaction uridine(55) in tRNA = pseudouridine(55) in tRNA. In terms of biological role, responsible for synthesis of pseudouridine from uracil-55 in the psi GC loop of transfer RNAs. The protein is tRNA pseudouridine synthase B of Sulfurimonas denitrificans (strain ATCC 33889 / DSM 1251) (Thiomicrospira denitrificans (strain ATCC 33889 / DSM 1251)).